The sequence spans 190 residues: Elongation factor P 2 (190 aa).

It belongs to the elongation factor P family.

The protein localises to the cytoplasm. It participates in protein biosynthesis; polypeptide chain elongation. Its function is as follows. Involved in peptide bond synthesis. Stimulates efficient translation and peptide-bond synthesis on native or reconstituted 70S ribosomes in vitro. Probably functions indirectly by altering the affinity of the ribosome for aminoacyl-tRNA, thus increasing their reactivity as acceptors for peptidyl transferase. The polypeptide is Elongation factor P 2 (efp2) (Chlamydia trachomatis serovar D (strain ATCC VR-885 / DSM 19411 / UW-3/Cx)).